The sequence spans 468 residues: Membrane-associated tyrosine- and threonine-specific cdc2-inhibitory kinase wee-1.1 (468 aa).

Positions 25–42 (SKDEPNKLNTSRKLEVTT) are enriched in basic and acidic residues. The segment at 25 to 63 (SKDEPNKLNTSRKLEVTTKKNQSNNKKRPPPINKARKSL) is disordered. Residues 49 to 61 (NKKRPPPINKARK) are compositionally biased toward basic residues. In terms of domain architecture, Protein kinase spans 106–357 (FNFDKNLGKG…SELMKNHVVK (252 aa)). ATP contacts are provided by residues 112-120 (LGKGSFGEV) and Lys-135. The active-site Proton acceptor is the Asp-224. Asn-229 and Asp-242 together coordinate Mg(2+). The interval 425–453 (EDEYEVFSPPRTPVKKSRYQQTMPEVSPP) is disordered.

It belongs to the protein kinase superfamily. Ser/Thr protein kinase family. WEE1 subfamily. As to expression, in the 12-13-cell embryo, expressed in the E blastomere. In the 16-cell embryo, expressed in the eight AB cells.

Its subcellular location is the nucleus. The catalysed reaction is L-seryl-[protein] + ATP = O-phospho-L-seryl-[protein] + ADP + H(+). The enzyme catalyses L-threonyl-[protein] + ATP = O-phospho-L-threonyl-[protein] + ADP + H(+). Acts as a negative regulator of entry into mitosis (G2 to M transition) by phosphorylation of the CDK1 kinase. In Caenorhabditis elegans, this protein is Membrane-associated tyrosine- and threonine-specific cdc2-inhibitory kinase wee-1.1 (wee-1.1).